The primary structure comprises 667 residues: Protein OS-9 (667 aa).

An N-terminal signal peptide occupies residues 1-25 (MAAETLLSSLLGLLLLGLLLPASLT). The MRH domain occupies 108–230 (APCLLKTKDW…TIRTPRLCPH (123 aa)). A disulfide bridge connects residues cysteine 110 and cysteine 123. A mannooligosaccharide derivative is bound by residues tryptophan 117, tryptophan 118, and glutamine 130. N-linked (GlcNAc...) asparagine glycosylation is present at asparagine 177. Cystine bridges form between cysteine 181/cysteine 216 and cysteine 196/cysteine 228. Aspartate 182, arginine 188, glutamate 212, and tyrosine 218 together coordinate a mannooligosaccharide derivative. Disordered stretches follow at residues 284 to 355 (WSET…NNVQ), 372 to 452 (LKGG…RDRL), 464 to 483 (LENIIQETEKELDPDGLKKE), 504 to 540 (LEEKQSPELVKKHKKKRVVPKKPPPSPQPTEEDPEHR), and 633 to 667 (AQKERQRQKELESNYRRVWGSPGGEGTGDLDEFDF). 2 stretches are compositionally biased toward basic and acidic residues: residues 302–311 (TKDDSKDSDF) and 396–412 (PQREPEKERGDPERQRE). The span at 413–429 (MEEEEDEDEDEDEDEDE) shows a compositional bias: acidic residues. Residues 430-452 (RQLLGEFEKELEGILLPSDRDRL) show a composition bias toward basic and acidic residues. Residues 504–513 (LEEKQSPELV) are compositionally biased toward basic and acidic residues. A compositionally biased stretch (basic residues) spans 514-523 (KKHKKKRVVP). Over residues 633 to 647 (AQKERQRQKELESNY) the composition is skewed to basic and acidic residues.

This sequence belongs to the OS-9 family. As to quaternary structure, component of the HRD1 complex, which comprises at least SYNV1/HRD1, DERL1/2, FAM8A1, HERPUD1/HERP, OS9, SEL1L and UBE2J1. FAM8A1 is stabilized by interaction with SYNV1, which prevents its proteasomal degradation. OS9 and UBE2J1 recruitment to the complex may be mediated by SEL1L. Through this complex, may interact with ERLEC1 and HSPA5. Interacts (via C-terminus) with CPNE6 (via second C2 domain); this interaction occurs in a calcium-dependent manner in vitro. Interacts with CREB3. Intramolecular disulfide bonds. Post-translationally, isoform 1 and isoform 2 are N-glycosylated. As to expression, ubiquitously expressed. Found as well in all tumor cell lines analyzed, amplified in sarcomas. Highly expressed in osteosarcoma SJSA-1 and rhabdomyosarcoma Rh30 cell lines. Isoform 2 is the major isoform detected in all cell types examined.

The protein resides in the endoplasmic reticulum lumen. Functionally, lectin component of the HRD1 complex, which functions in endoplasmic reticulum (ER) quality control and ER-associated degradation (ERAD). Specifically recognizes and binds improperly folded glycoproteins as well as hyperglycosylated proteins, retain them in the ER, and transfers them to the ubiquitination machinery and promote their degradation. Possible targets include TRPV4 as well as hyperglycosylated HSP90B1. The polypeptide is Protein OS-9 (OS9) (Homo sapiens (Human)).